A 205-amino-acid chain; its full sequence is High frequency lysogenization protein HflD homolog (205 aa).

Belongs to the HflD family.

The protein resides in the cytoplasm. It is found in the cell inner membrane. This Haemophilus influenzae (strain 86-028NP) protein is High frequency lysogenization protein HflD homolog.